We begin with the raw amino-acid sequence, 423 residues long: Cyclin-dependent kinase 14 (423 aa).

The segment at 62-85 (VGKESPKVRRHSSPSSPTSPKFGK) is disordered. The Protein kinase domain occupies 89-373 (YEKLEKLGEG…AQAALNHDYF (285 aa)). Residues 95–103 (LGEGSYATV) and lysine 118 each bind ATP. Aspartate 210 acts as the Proton acceptor in catalysis.

Belongs to the protein kinase superfamily. CMGC Ser/Thr protein kinase family. CDC2/CDKX subfamily. In terms of assembly, interacts with ccny; ccny mediates its recruitment to the plasma membrane and promotes phosphorylation of lrp6.

Its subcellular location is the cell membrane. The catalysed reaction is L-seryl-[protein] + ATP = O-phospho-L-seryl-[protein] + ADP + H(+). It catalyses the reaction L-threonyl-[protein] + ATP = O-phospho-L-threonyl-[protein] + ADP + H(+). In terms of biological role, serine/threonine-protein kinase involved in the control of the eukaryotic cell cycle, whose activity is controlled by an associated cyclin. Acts as a cell-cycle regulator of Wnt signaling pathway during G2/M phase by mediating the phosphorylation of lrp6, leading to the activation of the Wnt signaling pathway. This is Cyclin-dependent kinase 14 (cdk14) from Xenopus tropicalis (Western clawed frog).